The primary structure comprises 668 residues: Packaging protein UL32 homolog (668 aa).

Residues 1-10 (MNPSTHVSSN) show a composition bias toward polar residues. A disordered region spans residues 1–35 (MNPSTHVSSNGPTTPPHGPHTTFLPPTSPAPSTSS). The span at 19 to 35 (PHTTFLPPTSPAPSTSS) shows a compositional bias: low complexity. Residues C200, C203, H276, and C282 each contribute to the Zn(2+) site. The segment at 200 to 282 (CNLCAIISIC…FHLHFFINRC (83 aa)) is zinc finger 1. Basic and acidic residues-rich tracts occupy residues 392–401 (SEREDARMMM) and 410–419 (GEKGGDDPGR). Residues 392–430 (SEREDARMMMEEEEDEEGGEKGGDDPGRHNGGGTSGGFS) form a disordered region. Positions 459, 462, 567, and 574 each coordinate Zn(2+). Residues 459–574 (CLLCELMACS…YKHFFCDPQC (116 aa)) form a zinc finger 2 region.

It belongs to the herpesviridae UL32 protein family.

It is found in the host cytoplasm. The protein localises to the host nucleus. Plays a role in efficient localization of neo-synthesized capsids to nuclear replication compartments, thereby controlling cleavage and packaging of virus genomic DNA. The sequence is that of Packaging protein UL32 homolog (UL52) from Homo sapiens (Human).